The following is a 751-amino-acid chain: Dendritic arbor reduction protein 1 (751 aa).

Residues 57–89 (NNNNTSSNNNHSSNSSSNNSNGSQTPNGNNNSS) show a composition bias toward low complexity. Disordered stretches follow at residues 57–167 (NNNN…PNSN), 248–275 (LMLSSSGSSNNNGSSNSSSNTGESATSQ), 304–351 (TEKQ…QQHL), 374–410 (LQQQHQQQQHLQHNNSSSSSPKLATPGDNSGNTSSYQ), 458–578 (SATA…AATG), and 594–639 (SAIQ…AAHI). Over residues 95–125 (HQHHQFHHHLHHHHSHQHHHQHHHLHQHHSH) the composition is skewed to basic residues. Residues 153–167 (AQQQQLQPAGSPNSN) are compositionally biased toward polar residues. 3 stretches are compositionally biased toward low complexity: residues 251 to 267 (SSSGSSNNNGSSNSSSN), 309 to 351 (RQQQ…QQHL), and 374 to 393 (LQQQHQQQQHLQHNNSSSSS). Over residues 400–410 (GDNSGNTSSYQ) the composition is skewed to polar residues. Composition is skewed to low complexity over residues 458–513 (SATA…SSAS), 527–548 (DPGSPGSSMVAAAAAAAAQRRT), and 594–610 (SAIQQQQQQPQQQQVPQ). 3 C2H2-type zinc fingers span residues 664–688 (HHCDFVGCSKVYTKSSHLKAHQRIH), 694–718 (YTCQWPECEWRFARSDELTRHYRKH), and 724–746 (FKCIVCERSFARSDHLALHMKRH).

This sequence belongs to the krueppel C2H2-type zinc-finger protein family. Highly enriched in the peripheral nervous system but is absent from the central nervous system. Expressed in neurons with more than one dendrite including da neurons, bd neurons and the dmd1 neuron but undetectable in neurons with single dendrites such as external sensory organ neurons and chodonotal neurons.

It is found in the nucleus. Functionally, transcriptional regulator which promotes dendrite growth by suppressing, either directly or indirectly, the expression of the microtubule-severing protein spas. Determines multipolar neuron morphology in postmitotic neurons by positively regulating the expression of genes involved in nuclear positioning including several dynein genes and the nuclear migration protein nudC. This chain is Dendritic arbor reduction protein 1, found in Drosophila melanogaster (Fruit fly).